Consider the following 184-residue polypeptide: Myosin regulatory light chain 1 (184 aa).

A disordered region spans residues 1-29; sequence MFSSKENSLGAKRAPFSSNTTSSQRVAAQ. Ser-36 is modified (phosphoserine). EF-hand domains are found at residues 45–80 and 114–149; these read SQIQ…LNQD and SPRN…MGDR. 5 residues coordinate Ca(2+): Asp-58, Asp-60, Asp-62, Asn-64, and Asp-69.

In terms of assembly, binds to myosin II chains myo2 and myo3.

Its subcellular location is the cytoplasm. The sequence is that of Myosin regulatory light chain 1 (rlc1) from Schizosaccharomyces pombe (strain 972 / ATCC 24843) (Fission yeast).